The primary structure comprises 185 residues: Ribosome-recycling factor (185 aa).

The disordered stretch occupies residues 138–159; it reads KVKKLEKDKEISEDESKKAQEQ.

The protein belongs to the RRF family.

The protein resides in the cytoplasm. Functionally, responsible for the release of ribosomes from messenger RNA at the termination of protein biosynthesis. May increase the efficiency of translation by recycling ribosomes from one round of translation to another. The protein is Ribosome-recycling factor of Helicobacter acinonychis (strain Sheeba).